A 310-amino-acid polypeptide reads, in one-letter code: 2-dehydropantoate 2-reductase (310 aa).

NADP(+)-binding positions include 9–14 (GVGAIG) and Asn-100. Asn-100 is a binding site for substrate. Lys-184 acts as the Proton donor in catalysis. Substrate contacts are provided by Asn-188, Asn-192, and Ser-259. Position 270 (Glu-270) interacts with NADP(+).

The protein belongs to the ketopantoate reductase family.

The protein resides in the cytoplasm. It catalyses the reaction (R)-pantoate + NADP(+) = 2-dehydropantoate + NADPH + H(+). It functions in the pathway cofactor biosynthesis; (R)-pantothenate biosynthesis; (R)-pantoate from 3-methyl-2-oxobutanoate: step 2/2. Catalyzes the NADPH-dependent reduction of ketopantoate into pantoic acid. This chain is 2-dehydropantoate 2-reductase, found in Aquifex aeolicus (strain VF5).